We begin with the raw amino-acid sequence, 1770 residues long: AF4/FMR2 family member lilli (1770 aa).

Composition is skewed to low complexity over residues 1-19 (MAQQQQQQQQQQHLQHPHQ), 154-204 (LGHS…YLKQ), and 227-269 (PSSS…GTTP). Disordered stretches follow at residues 1–28 (MAQQQQQQQQQQHLQHPHQNTNSNNQLQ), 134–327 (SRHA…EKDI), 402–660 (TSLL…PGNV), 761–805 (LHSA…LQLP), 822–1173 (MQKA…KQGQ), and 1291–1390 (KHEH…QISK). A compositionally biased stretch (polar residues) spans 402–414 (TSLLTTPPHASQG). The span at 434 to 447 (KAAAALSPTAAAKP) shows a compositional bias: low complexity. A compositionally biased stretch (basic and acidic residues) spans 448 to 461 (LKTEKNHTLEKQDS). The segment covering 463–474 (LENDLELSESED) has biased composition (acidic residues). 2 positions are modified to phosphoserine: Ser470 and Ser472. Positions 483–503 (SAGNSSNSSESDSSESGSESS) are enriched in low complexity. The segment covering 511–520 (QHHHHNHHHQ) has biased composition (basic residues). Positions 521–552 (QQQQQLQQQQQQQLLQQKQQHQQILQQQQRQL) are enriched in low complexity. Residues 582–614 (FGSGGAGNGGCSTASSGGGGGGSGSGGGSGSSS) show a composition bias toward gly residues. Low complexity predominate over residues 615-625 (GIGTMSSGSSS). Polar residues-rich tracts occupy residues 626–638 (NKTPSPTESNKWT) and 647–659 (ANQTSSESVSPGN). Over residues 768 to 800 (SDSGTSGSGSTSSSSSSSDSAPGEVVPMPGPGE) the composition is skewed to low complexity. A compositionally biased stretch (basic residues) spans 844-854 (QRQKKPRKKKP). Phosphoserine occurs at positions 863 and 864. Low complexity-rich tracts occupy residues 880–893 (AAAAAAAQAQATAT), 909–928 (QQQSGGSGNLSSASAGSSSQ), 994–1028 (ANASAVAAASSSSDEDSSSSTGSTGSKSSSSSSSS), 1071–1081 (SGSSSPSSSSS), and 1111–1131 (SQHSQQLSSSECSSSSGSSTS). Positions 900–912 (KKGRGRPRKQQQS) form a DNA-binding region, a.T hook. 2 positions are modified to phosphoserine: Ser920 and Ser922. Composition is skewed to basic and acidic residues over residues 1295–1312 (PHPVKPEPELDAGYESKF) and 1321–1355 (FQLKQERDRERERERDRDRERERERERDREREREQ). Position 1442 is a phosphoserine (Ser1442). Low complexity-rich tracts occupy residues 1483–1499 (AAATATAATSTTGTSTA) and 1656–1676 (GNTPSSISPSNSVGSQGSGSN). Disordered regions lie at residues 1483–1502 (AAATATAATSTTGTSTAPPA) and 1656–1683 (GNTPSSISPSNSVGSQGSGSNTPPGKIV).

It belongs to the AF4 family.

The protein resides in the nucleus. Functionally, has a role in transcriptional regulation. Acts in parallel with the Ras/MAPK and the PI3K/PKB pathways in the control of cell identity and cellular growth. Essential for regulation of the cytoskeleton and cell growth but not for cell proliferation or growth rate. Required specifically for the microtubule-based basal transport of lipid droplets. Plays a partially redundant function downstream of Raf in cell fate specification in the developing eye. Pair-rule protein that regulates embryonic cellularization, gastrulation and segmentation. This chain is AF4/FMR2 family member lilli, found in Drosophila pseudoobscura pseudoobscura (Fruit fly).